The primary structure comprises 321 residues: Transmembrane protein 255A (321 aa).

Helical transmembrane passes span 29-49 (VFVTVTLLIVSSLIFTLGMAA), 56-76 (VTVGGYYPGVILGFGSILGII), 88-108 (LVASIVFISFGVIAAFCCAIV), and 200-220 (TILNIVGLFLGIITAAVLGGF). Residues 279 to 297 (STPSGLSDDPNGQASSFMW) are compositionally biased toward polar residues. Residues 279 to 300 (STPSGLSDDPNGQASSFMWPSN) are disordered.

Belongs to the TMEM255 family.

It localises to the membrane. This Xenopus laevis (African clawed frog) protein is Transmembrane protein 255A (tmem255a).